We begin with the raw amino-acid sequence, 95 residues long: Putative membrane protein insertion efficiency factor (95 aa).

The protein belongs to the UPF0161 family.

It is found in the cell membrane. Could be involved in insertion of integral membrane proteins into the membrane. This chain is Putative membrane protein insertion efficiency factor, found in Lactobacillus delbrueckii subsp. bulgaricus (strain ATCC 11842 / DSM 20081 / BCRC 10696 / JCM 1002 / NBRC 13953 / NCIMB 11778 / NCTC 12712 / WDCM 00102 / Lb 14).